Reading from the N-terminus, the 78-residue chain is Defensin-like protein 90 (78 aa).

A signal peptide spans 1-25 (MTTKMFSYVLLHSLMMFAIILSSMG). Intrachain disulfides connect C33/C70, C38/C59, C44/C68, and C48/C69.

It belongs to the DEFL family.

The protein resides in the secreted. The sequence is that of Defensin-like protein 90 from Arabidopsis thaliana (Mouse-ear cress).